The chain runs to 373 residues: GPN-loop GTPase 1 (373 aa).

N-acetylalanine is present on Ala-2. GTP is bound at residue 29-34 (GSGKTT). The Gly-Pro-Asn (GPN)-loop; involved in dimer interface motif lies at 86–88 (GPN). Residue 189 to 192 (NKTD) coordinates GTP. Residues Ser-301, Ser-312, and Ser-314 each carry the phosphoserine modification. Residues 304–373 (LDTGTATGSS…SMAQYWKKNK (70 aa)) form a disordered region. Thr-328 carries the post-translational modification Phosphothreonine. Over residues 330 to 342 (DEEDEEADSDTDD) the composition is skewed to acidic residues. Ser-338 bears the Phosphoserine mark. Thr-340 is subject to Phosphothreonine. Residues 343 to 355 (IDHRVTEESREEP) are compositionally biased toward basic and acidic residues.

The protein belongs to the GPN-loop GTPase family. As to quaternary structure, heterodimer with GPN3. Binds to RNA polymerase II (RNAPII). Interacts directly with RNAPII subunits RPB4 and RPB7 and the CTD of RPB1. Interacts with XPA.

The protein resides in the cytoplasm. It is found in the nucleus. In terms of biological role, small GTPase required for proper nuclear import of RNA polymerase II (RNAPII). May act at an RNAP assembly step prior to nuclear import. Forms an interface between the RNA polymerase II enzyme and chaperone/scaffolding proteins, suggesting that it is required to connect RNA polymerase II to regulators of protein complex formation. May be involved in nuclear localization of XPA. The sequence is that of GPN-loop GTPase 1 from Bos taurus (Bovine).